The primary structure comprises 596 residues: Mitoguardin 2 (596 aa).

2 helical membrane passes run Ile-11–Gly-31 and Leu-40–Leu-60. Disordered stretches follow at residues Arg-67–Glu-158 and Ala-576–Asp-596. Residues Met-110 to Val-123 are compositionally biased toward polar residues. The span at Ser-124 to Ser-140 shows a compositional bias: low complexity. 2 stretches are compositionally biased toward polar residues: residues Val-143 to Asn-152 and Gln-583 to Asp-596.

Belongs to the mitoguardin family. Homodimer and heterodimer; forms heterodimers with miga1.

It is found in the mitochondrion outer membrane. Its function is as follows. Regulator of mitochondrial fusion: acts by forming homo- and heterodimers at the mitochondrial outer membrane and facilitating the formation of pld6/MitoPLD dimers. May act by regulating phospholipid metabolism via pld6/MitoPLD. This Danio rerio (Zebrafish) protein is Mitoguardin 2.